Reading from the N-terminus, the 428-residue chain is GTPase HflX (428 aa).

Positions 214-374 (PVVAIVGYTN…AIERELFKET (161 aa)) constitute a Hflx-type G domain. GTP-binding positions include 220-227 (GYTNAGKS), 245-249 (FATLD), 267-270 (DTVG), 333-336 (NKID), and 352-354 (SAK). Mg(2+)-binding residues include serine 227 and threonine 247.

It belongs to the TRAFAC class OBG-HflX-like GTPase superfamily. HflX GTPase family. Monomer. Associates with the 50S ribosomal subunit. Requires Mg(2+) as cofactor.

It is found in the cytoplasm. Functionally, GTPase that associates with the 50S ribosomal subunit and may have a role during protein synthesis or ribosome biogenesis. The sequence is that of GTPase HflX from Caldanaerobacter subterraneus subsp. tengcongensis (strain DSM 15242 / JCM 11007 / NBRC 100824 / MB4) (Thermoanaerobacter tengcongensis).